The following is a 425-amino-acid chain: Diacetylchitobiose binding protein DasA (425 aa).

Residues 1 to 20 form the signal peptide; sequence MKRKLIAAIGIAGMMVSIAA. A lipid anchor (N-palmitoyl cysteine) is attached at C21. The S-diacylglycerol cysteine moiety is linked to residue C21.

This sequence belongs to the bacterial solute-binding protein 1 family. As to quaternary structure, the complex is composed of two ATP-binding proteins (MsiK), two transmembrane proteins (DasB and DasC) and a solute-binding protein (DasA).

It localises to the cell membrane. Part of the ABC transporter complex DasABC-MsiK involved in N,N'-diacetylchitobiose ((GlcNAc)2) uptake. Binds specifically to (GlcNAc)2. Can also bind to GlcNAc, (GlcNAc)3, (GlcNAc)4 and (GlcNAc)5, but it exhibits the highest affinity for (GlcNAc)2. Involved in the control of morphological differentiation. This Streptomyces coelicolor (strain ATCC BAA-471 / A3(2) / M145) protein is Diacetylchitobiose binding protein DasA.